Consider the following 92-residue polypeptide: Small ribosomal subunit protein uS19c (92 aa).

This sequence belongs to the universal ribosomal protein uS19 family.

Its subcellular location is the plastid. The protein resides in the chloroplast. Functionally, protein S19 forms a complex with S13 that binds strongly to the 16S ribosomal RNA. This is Small ribosomal subunit protein uS19c from Thalassiosira pseudonana (Marine diatom).